Here is a 156-residue protein sequence, read N- to C-terminus: MPRKGHIAKRDVLPDPLYNSKVVTKLINSIMLDGKRGVAQKICYDAFEIIGEKSGKDAMEVFETAMNNIMPLLEVKARRIGGATYQVPIEVRPERRQTLGIRWMLIAARKRGERSMRERLAGELLDASNNTGAAVKKREDTHKMAEANKAFAHYRY.

This sequence belongs to the universal ribosomal protein uS7 family. In terms of assembly, part of the 30S ribosomal subunit. Contacts proteins S9 and S11.

One of the primary rRNA binding proteins, it binds directly to 16S rRNA where it nucleates assembly of the head domain of the 30S subunit. Is located at the subunit interface close to the decoding center, probably blocks exit of the E-site tRNA. The polypeptide is Small ribosomal subunit protein uS7 (Clostridium botulinum (strain Okra / Type B1)).